The primary structure comprises 153 residues: ORM1-like protein 2 (153 aa).

Topologically, residues 1–21 (MNVGVAHSEVNPNTRVMSSRG) are cytoplasmic. 2 helical membrane passes run 22 to 42 (IWLA…SIPF) and 43 to 63 (FSIP…MYLL). The Cytoplasmic segment spans residues 64–105 (LHTVKGTPFETPDQGKDRLLTHWEQIDYGMQCTSSRKFLSIS). Residues 106–126 (PVVLYLLTSFYIKYDPAHFMI) form a helical membrane-spanning segment. At 127–153 (NTASLLSVLLPKLPQFHGVRVFGINKY) the chain is on the extracellular side.

Belongs to the ORM family. As to quaternary structure, ceramide-sensitive subunit of the serine palmitoyltransferase (SPT) complex, which is also composed of SPTLC1, SPTLC2/3 and SPTSSA/B.

The protein resides in the endoplasmic reticulum membrane. Functionally, plays an essential role in the homeostatic regulation of sphingolipid de novo biosynthesis by modulating the activity of the serine palmitoyltransferase (SPT) in response to ceramide levels. When complexed to SPT, the binding of ceramides to its N-terminus stabilizes a conformation that block SPT substrate entry, hence preventing SPT catalytic activity. Through this mechanism, maintains ceramide levels at sufficient concentrations for the production of complex sphingolipids, but which prevents the accumulation of ceramides to levels that trigger apoptosis. The protein is ORM1-like protein 2 (ORMDL2) of Gallus gallus (Chicken).